A 173-amino-acid polypeptide reads, in one-letter code: Regulator of ribonuclease activity A (173 aa).

Belongs to the RraA family. As to quaternary structure, homotrimer. Binds to both RNA-binding sites in the C-terminal region of Rne and to RhlB.

The protein resides in the cytoplasm. In terms of biological role, globally modulates RNA abundance by binding to RNase E (Rne) and regulating its endonucleolytic activity. Can modulate Rne action in a substrate-dependent manner by altering the composition of the degradosome. Modulates RNA-binding and helicase activities of the degradosome. The polypeptide is Regulator of ribonuclease activity A (Vibrio vulnificus (strain YJ016)).